The sequence spans 659 residues: MNRFIMANSQQCLGCHACEIACVMAHNDEQHVLSQHHFHPRITVIKHQQQRSAVTCHHCEDAPCARSCPNGAISHVDDSIQVNQQKCIGCKSCVVACPFGTMQIVLTPVAAGKVKATAHKCDLCAGRENGPACVENCPADALQLVTDVALSGMAKSRRLRTARQEHQPWHASTAAQEMPVMSKVEQMQATPARGEPDKLAIEARKTGFDEIYLPFRADQAQREASRCLKCGEHSVCEWTCPLHNHIPQWIELVKAGNIDAAVELSHQTNTLPEITGRVCPQDRLCEGACTIRDEHGAVTIGNIERYISDQALAKGWRPDLSHVTKVDKRVAIIGAGPAGLACADVLTRNGVGVTVYDRHPEIGGLLTFGIPSFKLDKSLLARRREIFSAMGIHFELNCEVGKDVSLDSLLEQYDAVFVGVGTYRSMKAGLPNEDAPGVYDALPFLIANTKQVMGLEELPEEPFINTAGLNVVVLGGGDTAMDCVRTALRHGASNVTCAYRRDEANMPGSKKEVKNAREEGANFEFNVQPVALELNEQGHVCGIRFLRTRLGEPDAQGRRRPVPVEGSEFVMPADAVIMAFGFNPHGMPWLESHGVTVDKWGRIIADVESQYRYQTTNPKIFAGGDAVRGADLVVTAMAEGRHAAQGIIDWLGVKSVKSH.

5 consecutive 4Fe-4S ferredoxin-type domains span residues 3–22 (RFIM…EIAC), 47–77 (HQQQ…SHVD), 78–107 (DSIQ…IVLT), 114–147 (VKAT…LVTD), and 218–252 (DQAQ…WIEL). [4Fe-4S] cluster-binding residues include Cys-12, Cys-15, Cys-18, Cys-22, Cys-56, Cys-59, Cys-64, Cys-68, Cys-87, Cys-90, Cys-93, Cys-97, Cys-121, Cys-124, Cys-133, Cys-137, Cys-227, Cys-230, Cys-236, and Cys-240.

The cofactor is [4Fe-4S] cluster.

Functionally, involved in formate-dependent uric acid degradation under microaerobic and anaerobic conditions. May reduce the enzymes necessary for uric acid degradation. This Escherichia coli (strain K12) protein is Putative oxidoreductase AegA.